Consider the following 114-residue polypeptide: Protein U68 (114 aa).

This sequence belongs to the herpesviridae UL96 family.

The sequence is that of Protein U68 (U68) from Homo sapiens (Human).